The sequence spans 323 residues: Arginase-1 (323 aa).

Residues 1-27 are disordered; it reads MSSKPKSLEIIGAPFSKGQPRGGVEKG. Ser7 carries the post-translational modification Phosphoserine. Position 17 is an N6-succinyllysine (Lys17). Residues Ser62 and Ser72 each carry the phosphoserine modification. Lys75 carries the N6-succinyllysine modification. 4 residues coordinate Mn(2+): His101, Asp124, His126, and Asp128. Residues 126 to 130 and 137 to 139 contribute to the substrate site; these read HTDIN and SGN. The residue at position 163 (Ser163) is a Phosphoserine. Asp183 serves as a coordination point for substrate. Position 217 is a phosphoserine (Ser217). Residues Asp232 and Asp234 each contribute to the Mn(2+) site. Residues Thr246 and Glu277 each coordinate substrate. Phosphothreonine is present on Thr281.

This sequence belongs to the arginase family. As to quaternary structure, homotrimer. Interacts with CMTM6. Mn(2+) serves as cofactor. Expressed in macrophages. Expressed in precursor and mature group 2 innate lymphoid cells (ILC2s). Expressed in lung tumor-associated myeloid cells. Expressed in lung tumor-infiltrating dendritic cells.

The protein resides in the cytoplasm. Its subcellular location is the cytoplasmic granule. The enzyme catalyses L-arginine + H2O = urea + L-ornithine. The protein operates within nitrogen metabolism; urea cycle; L-ornithine and urea from L-arginine: step 1/1. Functionally, key element of the urea cycle converting L-arginine to urea and L-ornithine, which is further metabolized into metabolites proline and polyamides that drive collagen synthesis and bioenergetic pathways critical for cell proliferation, respectively; the urea cycle takes place primarily in the liver and, to a lesser extent, in the kidneys. Its function is as follows. Functions in L-arginine homeostasis in nonhepatic tissues characterized by the competition between nitric oxide synthase (NOS) and arginase for the available intracellular substrate arginine. Arginine metabolism is a critical regulator of innate and adaptive immune responses. Involved in an antimicrobial effector pathway in polymorphonuclear granulocytes (PMN). Upon PMN cell death is liberated from the phagolysosome and depletes arginine in the microenvironment leading to suppressed T cell and natural killer (NK) cell proliferation and cytokine secretion. In group 2 innate lymphoid cells (ILC2s) promotes acute type 2 inflammation in the lung and is involved in optimal ILC2 proliferation but not survival. Plays a role in the immune response of alternatively activated or M2 macrophages in processes such as wound healing and tissue regeneration, immune defense against multicellular pathogens and parasites, and immune suppression and allergic inflammation; the regulatory outcome seems to be organ specific. In tumor-infiltrating dendritic cells (DCs) and myeloid-derived suppressor cells (MDSCs) plays a role in suppression of T cell-mediated antitumor immunity. The protein is Arginase-1 (Arg1) of Mus musculus (Mouse).